We begin with the raw amino-acid sequence, 628 residues long: Beta-lactamase-like protein 1 (628 aa).

The signal sequence occupies residues 1-28 (MKNILSFSFSFSFLYILFLLLFLNNNLL). N-linked (GlcNAc...) asparagine glycosylation is found at Asn-45, Asn-68, Asn-198, and Asn-241. The span at 245-281 (NNNNNNNNNNNNNNNNNNNNNNNNNNNNNNNNNNNNN) shows a compositional bias: low complexity. The disordered stretch occupies residues 245-285 (NNNNNNNNNNNNNNNNNNNNNNNNNNNNNNNNNNNNNKIKT). N-linked (GlcNAc...) asparagine glycosylation is found at Asn-313 and Asn-335. The tract at residues 494–516 (EKEEKEEEEENQQDESQQQQQQQ) is disordered. Residues 496–506 (EEKEEEEENQQ) show a composition bias toward acidic residues. Over residues 507 to 516 (DESQQQQQQQ) the composition is skewed to low complexity.

Belongs to the beta-lactamase family.

Its subcellular location is the secreted. This is Beta-lactamase-like protein 1 from Dictyostelium discoideum (Social amoeba).